The chain runs to 429 residues: Lysine-specific demethylase JMJ30 (429 aa).

The 158-residue stretch at 272 to 429 (SSPMEPTYLA…WSNEAESSSS (158 aa)) folds into the JmjC domain. Histidine 326, aspartate 328, and histidine 405 together coordinate Fe cation.

This sequence belongs to the JARID1 histone demethylase family. In terms of assembly, interacts with EFM. Binds to ATXR2, ARF7 and ARF19. The cofactor is Fe(2+). As to expression, expressed ubiquitously in vasculatures, roots, rosette leaves, stems, inflorescences and siliques. Mainly present in the root meristem and root differentiation area. Observed at high level in callus.

Its subcellular location is the nucleus. The protein localises to the cytoplasm. It localises to the endoplasmic reticulum. The catalysed reaction is N(6),N(6),N(6)-trimethyl-L-lysyl(36)-[histone H3] + 2 2-oxoglutarate + 2 O2 = N(6)-methyl-L-lysyl(36)-[histone H3] + 2 formaldehyde + 2 succinate + 2 CO2. It catalyses the reaction N(6),N(6),N(6)-trimethyl-L-lysyl(27)-[histone H3] + 2 2-oxoglutarate + 2 O2 = N(6)-methyl-L-lysyl(27)-[histone H3] + 2 formaldehyde + 2 succinate + 2 CO2. It carries out the reaction N(6),N(6)-dimethyl-L-lysyl(36)-[histone H3] + 2 2-oxoglutarate + 2 O2 = L-lysyl(36)-[histone H3] + 2 formaldehyde + 2 succinate + 2 CO2. Functionally, histone demethylase that demethylates 'Lys-36' (H3K36me) of histone H3 with a specific activity for H3K36me3 and H3K36me2. Also active on 'Lys-27' (H3K27me) of histone H3 with a specific activity for H3K27me3 and H3K27me2. No activity on H3K36me1 and H3K27me1. Involved in the control of flowering time by demethylating H3K36me2 at the FT locus and repressing its expression. Acts within the central clock and contributes, in parallel with LUX, to temperature compensation, probably as a component of the evening complex, to maintain circadian period at increasing temperatures; this mechanism involves binding to and regulation of CCA1 and PRR7 promoters. Works in concert with TOC1 to promote the morning-phased clock genes CCA1 and LHY which function as components of the central oscillator. Together with JMJ32, regulates the flowering-repressor FLOWERING LOCUS C (FLC) locus by removing the repressive histone modification H3 lysine 27 trimethylation (H3K27me3), especially at elevated temperatures (e.g. 29 degrees Celsius), thus preventing extreme precocious flowering. JMJ30 and JMJ32 are regulators involved in the integration of abscisic acid (ABA) and brassinosteroids (BR) signaling pathways. Together with JMJ32, controls ABA-mediated growth arrest during the post-germination stage in unfavorable conditions, and responses to ABA during root development, via the removal of repressive histone mark (H3K27me3) from the SnRK2.8 promoter, thus promoting SnRK2.8 expression and subsequent kinase-dependent ABI3 activation. In addition, removes the repressive histone marks (H3K27me3) from the BZR1 locus in response to stress and ABA, thus activating the BR signaling pathway which, in turn, inhibits the ABA signaling pathway. Able to drive tissue identity changes to promote callus formation form somatic cells via a massive genome-wide chromatin remodeling (e.g. H3K9me3 demethylation) leading to the induction of Lateral organ Boundaries-Domain (LBD) genes (e.g. LBD16 and LBD29) that establish root primordia; when in complex with ARF proteins (e.g. ARF7 and ARF19), recruits ATXR2 which promotes the deposition of H3K36me3 at LBD genes promoters, thus ensuring their stable activation during callus formation. This Arabidopsis thaliana (Mouse-ear cress) protein is Lysine-specific demethylase JMJ30.